Reading from the N-terminus, the 177-residue chain is Chorismate pyruvate-lyase (177 aa).

4 residues coordinate substrate: methionine 36, arginine 78, leucine 116, and glutamate 157.

It belongs to the UbiC family. Monomer.

The protein resides in the cytoplasm. The enzyme catalyses chorismate = 4-hydroxybenzoate + pyruvate. Its pathway is cofactor biosynthesis; ubiquinone biosynthesis. In terms of biological role, removes the pyruvyl group from chorismate, with concomitant aromatization of the ring, to provide 4-hydroxybenzoate (4HB) for the ubiquinone pathway. The protein is Chorismate pyruvate-lyase of Pectobacterium carotovorum subsp. carotovorum (strain PC1).